Reading from the N-terminus, the 341-residue chain is uncharacterized protein (341 aa).

A coiled-coil region spans residues 153 to 179 (AYTLSEKVMNAEREAEETRETIIREAH). The segment covering 319–335 (EQLQNPAPESAPSTSKT) has biased composition (polar residues). The disordered stretch occupies residues 319-341 (EQLQNPAPESAPSTSKTLRSKNP).

This is an uncharacterized protein from Coxiella burnetii (strain RSA 493 / Nine Mile phase I).